The chain runs to 74 residues: Translation initiation factor IF-1 (74 aa).

The region spanning 1–72 is the S1-like domain; it reads MSKEDAIEVE…NKGRITYRLK (72 aa).

The protein belongs to the IF-1 family. Component of the 30S ribosomal translation pre-initiation complex which assembles on the 30S ribosome in the order IF-2 and IF-3, IF-1 and N-formylmethionyl-tRNA(fMet); mRNA recruitment can occur at any time during PIC assembly.

It localises to the cytoplasm. In terms of biological role, one of the essential components for the initiation of protein synthesis. Stabilizes the binding of IF-2 and IF-3 on the 30S subunit to which N-formylmethionyl-tRNA(fMet) subsequently binds. Helps modulate mRNA selection, yielding the 30S pre-initiation complex (PIC). Upon addition of the 50S ribosomal subunit IF-1, IF-2 and IF-3 are released leaving the mature 70S translation initiation complex. The sequence is that of Translation initiation factor IF-1 from Synechococcus sp. (strain JA-3-3Ab) (Cyanobacteria bacterium Yellowstone A-Prime).